A 1396-amino-acid polypeptide reads, in one-letter code: DNA-directed RNA polymerase subunit beta' (1396 aa).

Zn(2+) is bound by residues C70, C72, C85, and C88. D460, D462, and D464 together coordinate Mg(2+). Residues C814, C888, C895, and C898 each contribute to the Zn(2+) site.

It belongs to the RNA polymerase beta' chain family. As to quaternary structure, the RNAP catalytic core consists of 2 alpha, 1 beta, 1 beta' and 1 omega subunit. When a sigma factor is associated with the core the holoenzyme is formed, which can initiate transcription. It depends on Mg(2+) as a cofactor. Zn(2+) is required as a cofactor.

It catalyses the reaction RNA(n) + a ribonucleoside 5'-triphosphate = RNA(n+1) + diphosphate. Functionally, DNA-dependent RNA polymerase catalyzes the transcription of DNA into RNA using the four ribonucleoside triphosphates as substrates. The sequence is that of DNA-directed RNA polymerase subunit beta' from Chromobacterium violaceum (strain ATCC 12472 / DSM 30191 / JCM 1249 / CCUG 213 / NBRC 12614 / NCIMB 9131 / NCTC 9757 / MK).